We begin with the raw amino-acid sequence, 332 residues long: Trace amine-associated receptor 1 (332 aa).

The Extracellular portion of the chain corresponds to 1–23 (MHLCHAITNISHRNSDWSREVQA). An N-linked (GlcNAc...) asparagine glycan is attached at N9. Residues 24 to 48 (SLYSLMSLIILATLVGNLIVIISIS) form a helical membrane-spanning segment. The Cytoplasmic segment spans residues 49–58 (HFKQLHTPTN). A helical membrane pass occupies residues 59–80 (WLLHSMAIVDFLLGCLIMPCSM). Topologically, residues 81–95 (VRTVERCWYFGEILC) are extracellular. A disulfide bridge links C95 with C181. The helical transmembrane segment at 96-118 (KVHTSTDIMLSSASIFHLAFISI) threads the bilayer. D102 contacts 2-phenylethylamine. Residues 119-138 (DRYCAVCDPLRYKAKINIST) lie on the Cytoplasmic side of the membrane. Residues 139–160 (ILVMILVSWSLPAVYAFGMIFL) form a helical membrane-spanning segment. Over 161–187 (ELNLKGVEELYRSQVSDLGGCSPFFSK) the chain is Extracellular. Positions 174-185 (QVSDLGGCSPFF) are extracellular Loop 2 (ECL2). A helical membrane pass occupies residues 188–210 (VSGVLAFMTSFYIPGSVMLFVYY). The Cytoplasmic portion of the chain corresponds to 211-246 (RIYFIAKGQARSINRTNVQVGLEGKSQAPQSKETKA). A helical membrane pass occupies residues 247-270 (AKTLGIMVGVFLVCWCPFFLCTVL). The Extracellular segment spans residues 271–283 (DPFLGYVIPPSLN). A helical membrane pass occupies residues 284-304 (DALYWFGYLNSALNPMVYAFF). The Cytoplasmic segment spans residues 305 to 332 (YPWFRRALKMVLLGKIFQKDSSRSKLFL).

Belongs to the G-protein coupled receptor 1 family. As to expression, widely distributed throughout the brain. Strongly expressed in the mitral cell layer of the olfactory bulb, piriform cortex, the arcuate, motor, and mesencephalic trigeminal nuclei, lateral reticular and hypoglossal nuclei, cerebellar Purkinje cells, and ventral horn of the spinal cord. Moderately expressed in the frontal, entorhinal, and agranular cortices, the ventral pallidum, thalamus, hippocampus, several hypothalamic nuclei, ambiguus, dorsal raphe, and gigantocellular reticular nuclei. Weakly expressed in the septum, basal ganglia, amygdala, myelencephalon, and spinal cord dorsal horn. Particularly interesting is the moderate expression in several monoaminergic cell groups, namely the dorsal raphe, the locus coeruleus, and the ventral tegmental area.

Its subcellular location is the endomembrane system. It localises to the endoplasmic reticulum membrane. The protein localises to the cell membrane. Its activity is regulated as follows. Activated by SEP-363856 small molecule: IHCH-7179 acts both as an agonist activator for HTR1A and TAAR1. In terms of biological role, intracellular G-protein coupled receptor for trace amines, which recognizes endogenous amine-containing metabolites such as beta-phenylethylamine (beta-PEA), 3-iodothyronamine (T1AM), isoamylamine (IAA), cadaverine (CAD), cyclohexylamine (CHA), p-tyramine (p-TYR), trimethylamine (TMA), octopamine and tryptamine. Also functions as a receptor for various drugs and psychoactive substances, such as amphetamine and methamphetamine. Unresponsive to classical biogenic amines, such as epinephrine and histamine and only partially activated by dopamine and serotonin. Expressed in both the central and peripheral nervous system: TAAR1 activation regulates the activity of several neurotransmitter signaling pathways by (1) decreasing the basal firing rates of the neurons involved and by (2) lowering the sensitivity of receptors to neurotransmitters. Ligand binding causes a conformation change that triggers signaling via guanine nucleotide-binding proteins (G proteins) and modulates the activity of downstream effectors. TAAR1 is coupled with different G(i)/G(o)-, G(s)- or G(q)/G(11) classes of G alpha proteins depending on the ligand. CAD-binding is coupled to G(i)/G(o) G alpha proteins and mediates inhibition of adenylate cyclase activity. T1AM- or beta-PEA-binding is coupled to G(s) G alpha proteins and mediates activation of adenylate cyclase activity. CHA- or IAA-binding is coupled to G(q)/G(11) G alpha proteins and activates phospholipase C-beta, releasing diacylglycerol (DAG) and inositol 1,4,5-trisphosphate (IP3) second messengers. TMA-binding is coupled with all three G(i)/G(o)-, G(s)- or G(q)/G(11) G alpha protein subtypes. The polypeptide is Trace amine-associated receptor 1 (Mus musculus (Mouse)).